A 323-amino-acid chain; its full sequence is Peroxisomal targeting signal 2 receptor (323 aa).

6 WD repeats span residues 65–96 (DWND…QLWD), 109–141 (EHAQ…KLWD), 153–184 (GHES…RIWD), 196–227 (AHQA…RGWD), 240–271 (GHTY…RFWN), and 284–315 (HHTE…KIYD).

This sequence belongs to the WD repeat peroxin-7 family. As to quaternary structure, interacts with PEX5; interaction only takes place when PEX7 is associated with cargo proteins. Interacts with VWA8. As to expression, ubiquitous. Highest expression in pancreas, skeletal muscle and heart.

The protein localises to the cytoplasm. The protein resides in the cytosol. It localises to the peroxisome matrix. In terms of biological role, receptor required for the peroxisomal import of proteins containing a C-terminal PTS2-type peroxisomal targeting signal. Specifically binds to cargo proteins containing a PTS2 peroxisomal targeting signal in the cytosol. Cargo protein-binding triggers interaction with PEX5 and formation of a ternary complex composed of PEX5 and PEX7 along with PTS2-containing cargo proteins, which is tranlocated into peroxisomes by passing through the PEX13-PEX14 docking complex. The chain is Peroxisomal targeting signal 2 receptor from Homo sapiens (Human).